We begin with the raw amino-acid sequence, 338 residues long: Glyceraldehyde-3-phosphate dehydrogenase (338 aa).

NAD(+) is bound by residues 12–13 (RI), aspartate 34, and arginine 79. D-glyceraldehyde 3-phosphate contacts are provided by residues 150–152 (SCT), threonine 181, 210–211 (TG), and arginine 233. The active-site Nucleophile is cysteine 151. Asparagine 316 lines the NAD(+) pocket.

Belongs to the glyceraldehyde-3-phosphate dehydrogenase family. As to quaternary structure, homotetramer.

It localises to the cytoplasm. It carries out the reaction D-glyceraldehyde 3-phosphate + phosphate + NAD(+) = (2R)-3-phospho-glyceroyl phosphate + NADH + H(+). The protein operates within carbohydrate degradation; glycolysis; pyruvate from D-glyceraldehyde 3-phosphate: step 1/5. In Phaffia rhodozyma (Yeast), this protein is Glyceraldehyde-3-phosphate dehydrogenase (GPD).